The sequence spans 268 residues: tRNA pseudouridine synthase A (268 aa).

Asp52 functions as the Nucleophile in the catalytic mechanism. Tyr110 contributes to the substrate binding site.

It belongs to the tRNA pseudouridine synthase TruA family. As to quaternary structure, homodimer.

The catalysed reaction is uridine(38/39/40) in tRNA = pseudouridine(38/39/40) in tRNA. Formation of pseudouridine at positions 38, 39 and 40 in the anticodon stem and loop of transfer RNAs. The sequence is that of tRNA pseudouridine synthase A from Prochlorococcus marinus (strain MIT 9301).